The chain runs to 151 residues: Large ribosomal subunit protein bL9 (151 aa).

This sequence belongs to the bacterial ribosomal protein bL9 family.

In terms of biological role, binds to the 23S rRNA. The protein is Large ribosomal subunit protein bL9 of Nitrosomonas europaea (strain ATCC 19718 / CIP 103999 / KCTC 2705 / NBRC 14298).